Reading from the N-terminus, the 452-residue chain is Bifunctional protein GlmU (452 aa).

Positions 1–224 are pyrophosphorylase; sequence MNIVILAAGQ…EWEVLGVNSK (224 aa). UDP-N-acetyl-alpha-D-glucosamine contacts are provided by residues 6–9, Lys20, Gln71, 76–77, 98–100, Gly134, Glu149, Asn164, and Asn222; these read LAAG, GT, and YGD. Asp100 provides a ligand contact to Mg(2+). Asn222 is a Mg(2+) binding site. Residues 225–245 are linker; that stretch reads VQLAELERQHQLNLAGELLVA. The interval 246-452 is N-acetyltransferase; sequence GVRLADPARI…GWERPKKVKK (207 aa). 2 residues coordinate UDP-N-acetyl-alpha-D-glucosamine: Arg328 and Lys346. His358 acts as the Proton acceptor in catalysis. UDP-N-acetyl-alpha-D-glucosamine contacts are provided by Tyr361 and Asn372. Residues Ala375, 381 to 382, Ser400, Ala418, and Arg435 contribute to the acetyl-CoA site; that span reads NY.

This sequence in the N-terminal section; belongs to the N-acetylglucosamine-1-phosphate uridyltransferase family. In the C-terminal section; belongs to the transferase hexapeptide repeat family. In terms of assembly, homotrimer. Mg(2+) serves as cofactor.

Its subcellular location is the cytoplasm. The enzyme catalyses alpha-D-glucosamine 1-phosphate + acetyl-CoA = N-acetyl-alpha-D-glucosamine 1-phosphate + CoA + H(+). The catalysed reaction is N-acetyl-alpha-D-glucosamine 1-phosphate + UTP + H(+) = UDP-N-acetyl-alpha-D-glucosamine + diphosphate. Its pathway is nucleotide-sugar biosynthesis; UDP-N-acetyl-alpha-D-glucosamine biosynthesis; N-acetyl-alpha-D-glucosamine 1-phosphate from alpha-D-glucosamine 6-phosphate (route II): step 2/2. The protein operates within nucleotide-sugar biosynthesis; UDP-N-acetyl-alpha-D-glucosamine biosynthesis; UDP-N-acetyl-alpha-D-glucosamine from N-acetyl-alpha-D-glucosamine 1-phosphate: step 1/1. It participates in bacterial outer membrane biogenesis; LPS lipid A biosynthesis. Catalyzes the last two sequential reactions in the de novo biosynthetic pathway for UDP-N-acetylglucosamine (UDP-GlcNAc). The C-terminal domain catalyzes the transfer of acetyl group from acetyl coenzyme A to glucosamine-1-phosphate (GlcN-1-P) to produce N-acetylglucosamine-1-phosphate (GlcNAc-1-P), which is converted into UDP-GlcNAc by the transfer of uridine 5-monophosphate (from uridine 5-triphosphate), a reaction catalyzed by the N-terminal domain. In Dechloromonas aromatica (strain RCB), this protein is Bifunctional protein GlmU.